The following is a 317-amino-acid chain: Transcription factor EC (317 aa).

A necessary for transcriptional transactivation region spans residues methionine 1–isoleucine 90. A bHLH domain is found at glutamine 110–leucine 163. Positions threonine 242–leucine 317 are necessary for transcriptional transactivation.

The protein belongs to the MiT/TFE family. As to quaternary structure, homodimer. Forms heterodimers with MITF. Interacts with MITF. Forms heterodimers with TFE3. In terms of tissue distribution, expressed in osteoclast-like cells (at protein level). Expressed in cells of the mononuclear phagocyte lineage. Expressed in macrophages and in osteoclast-like cells.

Its subcellular location is the nucleus. Its function is as follows. Transcriptional regulator that acts as a repressor or an activator. Acts as a transcriptional transactivator on the proximal promoter region of the tartrate-resistant acid phosphatase (TRAP) E-box containing promoter. Collaborates with MITF in target gene activation. Acts as a transcriptional repressor on minimal promoter containing element F (that includes an E-box sequence). Binds to element F in an E-box sequence-specific manner. Acts as a transcriptional repressor on minimal promoter containing mu E3 enhancer sequence. Binds to mu E3 DNA sequence of the immunoglobulin heavy-chain gene enhancer. Binds DNA in a homo- or heterodimeric form. The polypeptide is Transcription factor EC (Tfec) (Mus musculus (Mouse)).